Here is a 172-residue protein sequence, read N- to C-terminus: S-ribosylhomocysteine lyase (172 aa).

His-54, His-58, and Cys-128 together coordinate Fe cation.

The protein belongs to the LuxS family. In terms of assembly, homodimer. Fe cation serves as cofactor.

It carries out the reaction S-(5-deoxy-D-ribos-5-yl)-L-homocysteine = (S)-4,5-dihydroxypentane-2,3-dione + L-homocysteine. Involved in the synthesis of autoinducer 2 (AI-2) which is secreted by bacteria and is used to communicate both the cell density and the metabolic potential of the environment. The regulation of gene expression in response to changes in cell density is called quorum sensing. Catalyzes the transformation of S-ribosylhomocysteine (RHC) to homocysteine (HC) and 4,5-dihydroxy-2,3-pentadione (DPD). The sequence is that of S-ribosylhomocysteine lyase from Vibrio parahaemolyticus serotype O3:K6 (strain RIMD 2210633).